We begin with the raw amino-acid sequence, 261 residues long: DNA repair protein RecO (261 aa).

This sequence belongs to the RecO family.

Its function is as follows. Involved in DNA repair and RecF pathway recombination. The protein is DNA repair protein RecO of Pelodictyon phaeoclathratiforme (strain DSM 5477 / BU-1).